A 491-amino-acid chain; its full sequence is Cobyric acid synthase (491 aa).

Residues 250-439 (EVTIAVIRLP…LHGIFDNGAW (190 aa)) enclose the GATase cobBQ-type domain. Cys-331 acts as the Nucleophile in catalysis. Residue His-431 is part of the active site.

The protein belongs to the CobB/CobQ family. CobQ subfamily.

It participates in cofactor biosynthesis; adenosylcobalamin biosynthesis. In terms of biological role, catalyzes amidations at positions B, D, E, and G on adenosylcobyrinic A,C-diamide. NH(2) groups are provided by glutamine, and one molecule of ATP is hydrogenolyzed for each amidation. This chain is Cobyric acid synthase, found in Synechococcus elongatus (strain ATCC 33912 / PCC 7942 / FACHB-805) (Anacystis nidulans R2).